We begin with the raw amino-acid sequence, 801 residues long: Na(+)/H(+) antiporter subunit A1 (801 aa).

20 consecutive transmembrane segments (helical) span residues 1–21 (MSLL…IPFL), 30–50 (LGWF…SLIS), 79–99 (LGLL…LYSI), 117–137 (LFMG…LYLF), 166–186 (LIIT…LSLA), 206–226 (PFFI…SAQV), 228–250 (FYIW…HSAT), 265–285 (IFAI…ITLF), 300–320 (ILAF…GIGA), 337–357 (FVAA…LFMI), 373–393 (LGGL…TTLS), 427–447 (LGIL…VYSI), 472–492 (ILML…GLFP), 522–542 (GITP…LLLI), 591–611 (LVII…SVPF), 623–643 (VFEG…IFAK), 646–666 (LFSI…FIFF), 671–691 (LALT…LCFY), 707–727 (LTNA…GLIG), and 764–784 (MDTL…YTMI).

The protein belongs to the CPA3 antiporters (TC 2.A.63) subunit A family. May form a heterooligomeric complex that consists of seven subunits: mnhA1, mnhB1, mnhC1, mnhD1, mnhE1, mnhF1 and mnhG1.

The protein localises to the cell membrane. Functionally, mnh complex is a Na(+)/H(+) antiporter involved in Na(+) excretion. In Staphylococcus epidermidis (strain ATCC 35984 / DSM 28319 / BCRC 17069 / CCUG 31568 / BM 3577 / RP62A), this protein is Na(+)/H(+) antiporter subunit A1 (mnhA1).